Reading from the N-terminus, the 124-residue chain is uncharacterized protein (124 aa).

Disordered stretches follow at residues 1-31 (MAQHAFQDQEQEEGRNSRQQKRKSFEDTMKP) and 59-124 (EDAR…YPQP). Polar residues-rich tracts occupy residues 65 to 86 (GMSSVTPTSSASKIGTKTSDAA) and 98 to 124 (TGEQPSGIQAQNLRGQSSDQSACYPQP).

This is an uncharacterized protein from Bos taurus (Bovine).